The following is a 265-amino-acid chain: Putative cysteine-rich receptor-like protein kinase 9 (265 aa).

Residues 1 to 23 form the signal peptide; that stretch reads MSSLISFIFLFLFSFLTSFKASA. 2 consecutive Gnk2-homologous domains span residues 27–131 and 142–244; these read FYLN…DKNI and FILS…LYSF. N-linked (GlcNAc...) asparagine glycans are attached at residues Asn-35, Asn-60, Asn-69, Asn-153, Asn-177, and Asn-246.

The protein belongs to the protein kinase superfamily. Ser/Thr protein kinase family. CRK subfamily.

It localises to the secreted. This Arabidopsis thaliana (Mouse-ear cress) protein is Putative cysteine-rich receptor-like protein kinase 9 (CRK9).